The sequence spans 222 residues: MNLNKYIDHTLLKPQATEEDIKKICKEAKEYNFASVCVNTCYTSLVSKELEGTDVTTCVVVGFPLGATTTETKAFEAKQAIEQGAGEVDMVINVGALKSKKYDYVKKDIEAVVEAAKGKALVKVILENCLLEKEEIVKACELSKEAGADFVKTSTGFSTGGAKVEDVKLMRETVGPDMGVKASGAVRTKEDAEAVIAAGANRIGASSSIAIVEGTKSENAGY.

Asp-89 (proton donor/acceptor) is an active-site residue. Residue Lys-152 is the Schiff-base intermediate with acetaldehyde of the active site. Lys-181 (proton donor/acceptor) is an active-site residue.

Belongs to the DeoC/FbaB aldolase family. DeoC type 1 subfamily.

Its subcellular location is the cytoplasm. The catalysed reaction is 2-deoxy-D-ribose 5-phosphate = D-glyceraldehyde 3-phosphate + acetaldehyde. Its pathway is carbohydrate degradation; 2-deoxy-D-ribose 1-phosphate degradation; D-glyceraldehyde 3-phosphate and acetaldehyde from 2-deoxy-alpha-D-ribose 1-phosphate: step 2/2. Catalyzes a reversible aldol reaction between acetaldehyde and D-glyceraldehyde 3-phosphate to generate 2-deoxy-D-ribose 5-phosphate. The sequence is that of Deoxyribose-phosphate aldolase from Clostridium novyi (strain NT).